The following is a 607-amino-acid chain: COMPASS component cclA (607 aa).

A compositionally biased stretch (low complexity) spans methionine 1–proline 19. Disordered regions lie at residues methionine 1 to histidine 22 and glycine 34 to alanine 86. Over residues serine 57–glutamate 69 the composition is skewed to basic residues. Positions isoleucine 157–alanine 376 constitute a B30.2/SPRY domain. A disordered region spans residues asparagine 587–glycine 607.

The protein belongs to the cclA family. Component of the COMPASS complex.

The protein resides in the nucleus. Its subcellular location is the chromosome. It is found in the telomere. Its function is as follows. Component of the COMPASS (Set1C) complex that specifically mono-, di- and trimethylates histone H3 to form H3K4me1/2/3, which subsequently plays a role in telomere length maintenance and transcription elongation regulation. Controls the production of several secondary metabolites, including monodictyphenone, emodin and emodin derivatives, as well as two anti-osteoporosis polyketides, F9775A and F9775B. In Emericella nidulans (strain FGSC A4 / ATCC 38163 / CBS 112.46 / NRRL 194 / M139) (Aspergillus nidulans), this protein is COMPASS component cclA.